We begin with the raw amino-acid sequence, 481 residues long: Aspartyl/glutamyl-tRNA(Asn/Gln) amidotransferase subunit B (481 aa).

It belongs to the GatB/GatE family. GatB subfamily. Heterotrimer of A, B and C subunits.

It carries out the reaction L-glutamyl-tRNA(Gln) + L-glutamine + ATP + H2O = L-glutaminyl-tRNA(Gln) + L-glutamate + ADP + phosphate + H(+). The catalysed reaction is L-aspartyl-tRNA(Asn) + L-glutamine + ATP + H2O = L-asparaginyl-tRNA(Asn) + L-glutamate + ADP + phosphate + 2 H(+). Functionally, allows the formation of correctly charged Asn-tRNA(Asn) or Gln-tRNA(Gln) through the transamidation of misacylated Asp-tRNA(Asn) or Glu-tRNA(Gln) in organisms which lack either or both of asparaginyl-tRNA or glutaminyl-tRNA synthetases. The reaction takes place in the presence of glutamine and ATP through an activated phospho-Asp-tRNA(Asn) or phospho-Glu-tRNA(Gln). The protein is Aspartyl/glutamyl-tRNA(Asn/Gln) amidotransferase subunit B of Fusobacterium nucleatum subsp. nucleatum (strain ATCC 25586 / DSM 15643 / BCRC 10681 / CIP 101130 / JCM 8532 / KCTC 2640 / LMG 13131 / VPI 4355).